We begin with the raw amino-acid sequence, 574 residues long: Glutamyl-tRNA(Gln) amidotransferase subunit B, mitochondrial (574 aa).

This sequence belongs to the GatB/GatE family. GatB subfamily. Subunit of the heterotrimeric GatCAB amidotransferase (AdT) complex, composed of A, B and C subunits.

It localises to the mitochondrion. It catalyses the reaction L-glutamyl-tRNA(Gln) + L-glutamine + ATP + H2O = L-glutaminyl-tRNA(Gln) + L-glutamate + ADP + phosphate + H(+). Its function is as follows. Allows the formation of correctly charged Gln-tRNA(Gln) through the transamidation of misacylated Glu-tRNA(Gln) in the mitochondria. The reaction takes place in the presence of glutamine and ATP through an activated gamma-phospho-Glu-tRNA(Gln). In Phytophthora infestans (strain T30-4) (Potato late blight agent), this protein is Glutamyl-tRNA(Gln) amidotransferase subunit B, mitochondrial.